The chain runs to 212 residues: MDLQAMRREYGLGSLHREQLEADPVKQFEKWMQQAIDSNLLSDPTAMTLATVDAEHMPSQRIVLLKGYDHTGFRFYTNKNSHKGQDISENPQVALHFAWLPLERQISIIGSAVPLDDDDNDRYFHSRPKESQVAALASQQSRPVESRDVLESHYQSLLKDYENTEVPRPQSWGGYCVHPKQFEFWQGGQHRLHDRYQYSKDRENWRITRLQP.

Substrate is bound by residues 7–10 (RREY) and Lys66. FMN-binding positions include 61-66 (RIVLLK), 76-77 (YT), Lys83, and Gln105. Substrate contacts are provided by Tyr123, Arg127, and Ser131. Residues 140 to 141 (QS) and Trp185 contribute to the FMN site. 191–193 (RLH) lines the substrate pocket. Arg195 provides a ligand contact to FMN.

This sequence belongs to the pyridoxamine 5'-phosphate oxidase family. In terms of assembly, homodimer. The cofactor is FMN.

The enzyme catalyses pyridoxamine 5'-phosphate + O2 + H2O = pyridoxal 5'-phosphate + H2O2 + NH4(+). It catalyses the reaction pyridoxine 5'-phosphate + O2 = pyridoxal 5'-phosphate + H2O2. It participates in cofactor metabolism; pyridoxal 5'-phosphate salvage; pyridoxal 5'-phosphate from pyridoxamine 5'-phosphate: step 1/1. It functions in the pathway cofactor metabolism; pyridoxal 5'-phosphate salvage; pyridoxal 5'-phosphate from pyridoxine 5'-phosphate: step 1/1. Its function is as follows. Catalyzes the oxidation of either pyridoxine 5'-phosphate (PNP) or pyridoxamine 5'-phosphate (PMP) into pyridoxal 5'-phosphate (PLP). The chain is Pyridoxine/pyridoxamine 5'-phosphate oxidase from Idiomarina loihiensis (strain ATCC BAA-735 / DSM 15497 / L2-TR).